The chain runs to 59 residues: Embryonic testis differentiation protein homolog C (59 aa).

Positions 1 to 22 are disordered; the sequence is MDKELPKASPSEPALNIKKSGK.

This chain is Embryonic testis differentiation protein homolog C, found in Homo sapiens (Human).